A 757-amino-acid polypeptide reads, in one-letter code: Xaa-Pro dipeptidyl-peptidase (757 aa).

Residues serine 348, aspartate 468, and histidine 498 each act as charge relay system in the active site.

Belongs to the peptidase S15 family. As to quaternary structure, homodimer.

It is found in the cytoplasm. The enzyme catalyses Hydrolyzes Xaa-Pro-|- bonds to release unblocked, N-terminal dipeptides from substrates including Ala-Pro-|-p-nitroanilide and (sequentially) Tyr-Pro-|-Phe-Pro-|-Gly-Pro-|-Ile.. Functionally, removes N-terminal dipeptides sequentially from polypeptides having unsubstituted N-termini provided that the penultimate residue is proline. The chain is Xaa-Pro dipeptidyl-peptidase from Streptococcus pneumoniae (strain Hungary19A-6).